Reading from the N-terminus, the 155-residue chain is Probable ribosome biogenesis protein RLP24 (155 aa).

It belongs to the eukaryotic ribosomal protein eL24 family.

This Encephalitozoon cuniculi (strain GB-M1) (Microsporidian parasite) protein is Probable ribosome biogenesis protein RLP24 (RPL24).